The primary structure comprises 461 residues: Chromosomal replication initiator protein DnaA (461 aa).

The interval 1–87 (MAVSLWQQCI…IGSRPSAKPV (87 aa)) is domain I, interacts with DnaA modulators. Residues 87–124 (VVQATAAIRPKPAASKAVEKPTFNAPQAEPAITANHRS) form a domain II region. Residues 125–341 (NINPTYQFDN…GALNRVIANA (217 aa)) form a domain III, AAA+ region region. ATP contacts are provided by Gly169, Gly171, Lys172, and Thr173. The tract at residues 342-461 (NFTGRPITID…YANLIRTLSS (120 aa)) is domain IV, binds dsDNA.

The protein belongs to the DnaA family. As to quaternary structure, oligomerizes as a right-handed, spiral filament on DNA at oriC.

The protein localises to the cytoplasm. Its function is as follows. Plays an essential role in the initiation and regulation of chromosomal replication. ATP-DnaA binds to the origin of replication (oriC) to initiate formation of the DNA replication initiation complex once per cell cycle. Binds the DnaA box (a 9 base pair repeat at the origin) and separates the double-stranded (ds)DNA. Forms a right-handed helical filament on oriC DNA; dsDNA binds to the exterior of the filament while single-stranded (ss)DNA is stabiized in the filament's interior. The ATP-DnaA-oriC complex binds and stabilizes one strand of the AT-rich DNA unwinding element (DUE), permitting loading of DNA polymerase. After initiation quickly degrades to an ADP-DnaA complex that is not apt for DNA replication. Binds acidic phospholipids. In Shewanella piezotolerans (strain WP3 / JCM 13877), this protein is Chromosomal replication initiator protein DnaA.